A 269-amino-acid chain; its full sequence is Putative hydro-lyase M446_2125 (269 aa).

This sequence belongs to the D-glutamate cyclase family.

This is Putative hydro-lyase M446_2125 from Methylobacterium sp. (strain 4-46).